The primary structure comprises 469 residues: 3-isopropylmalate dehydratase large subunit (469 aa).

Positions 348, 409, and 412 each coordinate [4Fe-4S] cluster.

It belongs to the aconitase/IPM isomerase family. LeuC type 1 subfamily. In terms of assembly, heterodimer of LeuC and LeuD. The cofactor is [4Fe-4S] cluster.

The catalysed reaction is (2R,3S)-3-isopropylmalate = (2S)-2-isopropylmalate. It functions in the pathway amino-acid biosynthesis; L-leucine biosynthesis; L-leucine from 3-methyl-2-oxobutanoate: step 2/4. Its function is as follows. Catalyzes the isomerization between 2-isopropylmalate and 3-isopropylmalate, via the formation of 2-isopropylmaleate. This Nitrosococcus oceani (strain ATCC 19707 / BCRC 17464 / JCM 30415 / NCIMB 11848 / C-107) protein is 3-isopropylmalate dehydratase large subunit.